An 814-amino-acid polypeptide reads, in one-letter code: DNA replication licensing factor Mcm6 (814 aa).

The C4-type zinc finger occupies 152–179 (CLDCQTEIRDVEQQFKFTNPTICRNPVC). The MCM domain maps to 339–545 (LYQNLINSLF…VVDYAIARKI (207 aa)). The ATP site is built by Ser-392, Thr-393, Ala-394, Lys-395, Ser-396, and Asn-497. The Arginine finger motif lies at 521–524 (SRFD). Residues Arg-612 and Glu-615 each coordinate ADP. The disordered stretch occupies residues 656–696 (DIHLDEEEGEENENVMDIGEETPEDTPRTNETEENDQDTPA). Residues 659 to 679 (LDEEEGEENENVMDIGEETPE) are compositionally biased toward acidic residues.

It belongs to the MCM family. As to quaternary structure, component of the Mcm2-7 complex. The complex forms a toroidal hexameric ring with the proposed subunit order Mcm2-Mcm6-Mcm4-Mcm7-Mcm3-Mcm5 (By simililarity). The heterodimers of Mcm4/Mcm6 and Mcm3/Mcm5 interact with Mcm2 and Mcm7.

The protein resides in the nucleus. It catalyses the reaction ATP + H2O = ADP + phosphate + H(+). Acts as a component of the MCM2-7 complex (MCM complex) which is the replicative helicase essential for 'once per cell cycle' DNA replication initiation and elongation in eukaryotic cells. Core component of CDC45-MCM-GINS (CMG) helicase, the molecular machine that unwinds template DNA during replication, and around which the replisome is built. The active ATPase sites in the MCM2-7 ring are formed through the interaction surfaces of two neighboring subunits such that a critical structure of a conserved arginine finger motif is provided in trans relative to the ATP-binding site of the Walker A box of the adjacent subunit. The six ATPase active sites, however, are likely to contribute differentially to the complex helicase activity. This Anopheles gambiae (African malaria mosquito) protein is DNA replication licensing factor Mcm6.